The primary structure comprises 495 residues: Nuclear receptor subfamily 6 group A member 1 (495 aa).

The tract at residues 1–34 (MERDERPPSGGGGGGGSAGFLEPPAALPPPPRNG) is disordered. Gly residues predominate over residues 9-18 (SGGGGGGGSA). A DNA-binding region (nuclear receptor) is located at residues 72–147 (QRTCLICGDR…MGMNRKAIRE (76 aa)). Positions 75, 78, 92, 95, 111, 117, 127, and 130 each coordinate Zn(2+). 2 consecutive NR C4-type zinc fingers follow at residues 75–95 (CLIC…CEGC) and 111–135 (CSRD…LLKC). Disordered stretches follow at residues 145–165 (IRED…QISE) and 177–214 (FEEE…LSSS). The span at 180 to 192 (EANHWSNHGDSDH) shows a compositional bias: basic and acidic residues. Residues 187–268 (HGDSDHSSPG…RSLDPQSYSL (82 aa)) form a sufficient for interaction with UIMC1 region. Residues 202–214 (SNQPSPGSTLSSS) show a composition bias toward low complexity. One can recognise an NR LBD domain in the interval 264-495 (QSYSLIHQLM…HSCKTSTVKE (232 aa)).

This sequence belongs to the nuclear hormone receptor family. NR6 subfamily. Homodimer. Interacts with UIMC1. Expressed in the germ cells of both the adult testis and ovary, being most abundant in spermatids.

Its subcellular location is the nucleus. Its function is as follows. Orphan nuclear receptor that binds to a response element containing the sequence 5'-TCAAGGTCA-3'. Acts as a regulator of embryonic stem cell pluripotency by mediating repression of POU5F1/OCT4: binds to the DR0 element within the POU5F1/OCT4 promoter and inhibits POU5F1/OCT4 expression during embryonic stem cell differentiation. Required to restrict POU5F1/OCT4 expression to the germ cell lineage. Involved in the regulation of gene expression in germ cell development during gametogenesis. The polypeptide is Nuclear receptor subfamily 6 group A member 1 (Nr6a1) (Mus musculus (Mouse)).